A 129-amino-acid chain; its full sequence is Small ribosomal subunit protein uS9 (129 aa).

It belongs to the universal ribosomal protein uS9 family.

This chain is Small ribosomal subunit protein uS9, found in Chlorobium chlorochromatii (strain CaD3).